Here is a 137-residue protein sequence, read N- to C-terminus: Ribosome-binding factor A (137 aa).

It belongs to the RbfA family. Monomer. Binds 30S ribosomal subunits, but not 50S ribosomal subunits or 70S ribosomes.

It localises to the cytoplasm. In terms of biological role, one of several proteins that assist in the late maturation steps of the functional core of the 30S ribosomal subunit. Associates with free 30S ribosomal subunits (but not with 30S subunits that are part of 70S ribosomes or polysomes). Required for efficient processing of 16S rRNA. May interact with the 5'-terminal helix region of 16S rRNA. This chain is Ribosome-binding factor A, found in Shewanella amazonensis (strain ATCC BAA-1098 / SB2B).